Consider the following 170-residue polypeptide: Acetyl-CoA decarbonylase/synthase complex subunit epsilon 1 (170 aa).

This sequence belongs to the CdhB family. In terms of assembly, heterotetramer of two alpha and two epsilon subunits. The ACDS complex is made up of alpha, epsilon, beta, gamma and delta subunits with a probable stoichiometry of (alpha(2)epsilon(2))(4)-beta(8)-(gamma(1)delta(1))(8).

Its pathway is one-carbon metabolism; methanogenesis from acetate. Part of a complex that catalyzes the reversible cleavage of acetyl-CoA, allowing growth on acetate as sole source of carbon and energy. The alpha-epsilon subcomponent functions as a carbon monoxide dehydrogenase. The precise role of the epsilon subunit is unclear; it may have a stabilizing role within the alpha(2)epsilon(2) component and/or be involved in electron transfer to FAD during a potential FAD-mediated CO oxidation. This chain is Acetyl-CoA decarbonylase/synthase complex subunit epsilon 1, found in Methanosarcina barkeri (strain Fusaro / DSM 804).